The following is a 130-amino-acid chain: Small ribosomal subunit protein uS8 (130 aa).

The protein belongs to the universal ribosomal protein uS8 family.

The sequence is that of Small ribosomal subunit protein uS8 (RPS15A) from Strongylocentrotus purpuratus (Purple sea urchin).